We begin with the raw amino-acid sequence, 1249 residues long: Hyphally regulated cell wall protein 3 (1249 aa).

The first 20 residues, 1-20 (MHLFKRIALTLWLIISSTLA), serve as a signal peptide directing secretion. An N-linked (GlcNAc...) asparagine glycan is attached at N373. Low complexity predominate over residues 383–415 (FPTTSQSSSSETVASSSQPDSSSTEPSAFPSST). Disordered regions lie at residues 383–729 (FPTT…SGII) and 883–1217 (GLST…SSAS). The segment covering 416 to 428 (GDSSAEPSITSDY) has biased composition (polar residues). Low complexity predominate over residues 429–716 (SSSELSVVPS…SEYTATWTTT (288 aa)). N681 carries N-linked (GlcNAc...) asparagine glycosylation. Composition is skewed to polar residues over residues 717–729 (NSDG…SGII) and 883–935 (GLST…PVPT). Residues N891, N940, N944, N948, N952, N956, N960, N966, N970, N974, N984, N988, N992, N996, N1000, N1010, N1014, N1018, N1022, N1026, N1032, N1046, N1050, N1058, N1062, N1072, N1076, N1080, N1086, N1090, N1094, N1098, N1114, N1118, N1122, N1128, N1132, N1136, N1140, N1150, N1154, N1158, N1172, N1180, and N1186 are each glycosylated (N-linked (GlcNAc...) asparagine). Residues 941-959 (GSNNGSDNGSNNGSNNGSN) show a composition bias toward low complexity. Residues 960–982 (NGSGSGNGSNNGSNNGSGSGNGF) show a composition bias toward gly residues. Low complexity predominate over residues 983-1043 (NNGSDNGSNN…SNSGSDSGNG (61 aa)). Residues 1062 to 1078 (NGSGSGGESNNGSGNGS) are compositionally biased toward gly residues. Positions 1079-1097 (DNGSSPDNGSNNGSNNGSN) are enriched in low complexity. The segment covering 1139 to 1167 (NNGSNSGSNSDNGSNNSSGNGSSSDLGSV) has biased composition (low complexity). Low complexity-rich tracts occupy residues 1175 to 1194 (NEGS…GAGA) and 1205 to 1217 (SPSA…SSAS). N1225 is a glycosylation site (N-linked (GlcNAc...) asparagine). N1225 carries the GPI-anchor amidated asparagine lipid modification. Positions 1226–1249 (GSGKLLNGKVLTLSVLSSMVVVFL) are cleaved as a propeptide — removed in mature form.

Belongs to the HYR1/IFF family. Post-translationally, the GPI-anchor is attached to the protein in the endoplasmic reticulum and serves to target the protein to the cell surface. There, the glucosamine-inositol phospholipid moiety is cleaved off and the GPI-modified mannoprotein is covalently attached via its lipidless GPI glycan remnant to the 1,6-beta-glucan of the outer cell wall layer.

It is found in the secreted. The protein resides in the cell wall. The protein localises to the membrane. GPI-anchored cell wall protein involved in cell wall organization, hyphal growth, as well as in host-fungal interaction and virulence. This is Hyphally regulated cell wall protein 3 (HYR3) from Candida albicans (strain SC5314 / ATCC MYA-2876) (Yeast).